A 218-amino-acid polypeptide reads, in one-letter code: Cytochrome b6 (218 aa).

A helical transmembrane segment spans residues 35–55 (IFYCLGGITLVCFLIQFATGF). Position 38 (C38) interacts with heme c. Heme b is bound by residues H89 and H103. The next 3 membrane-spanning stretches (helical) occupy residues 93 to 113 (ASMM…TGGF), 119 to 139 (LTWV…VTGY), and 189 to 209 (LHTF…FLMI). The heme b site is built by H190 and H205.

It belongs to the cytochrome b family. PetB subfamily. As to quaternary structure, the 4 large subunits of the cytochrome b6-f complex are cytochrome b6, subunit IV (17 kDa polypeptide, PetD), cytochrome f and the Rieske protein, while the 4 small subunits are PetG, PetL, PetM and PetN. The complex functions as a dimer. Requires heme b as cofactor. Heme c serves as cofactor.

The protein resides in the cellular thylakoid membrane. Component of the cytochrome b6-f complex, which mediates electron transfer between photosystem II (PSII) and photosystem I (PSI), cyclic electron flow around PSI, and state transitions. This chain is Cytochrome b6, found in Synechococcus sp. (strain CC9311).